The primary structure comprises 166 residues: UPF0304 protein VS_1049 (166 aa).

The protein belongs to the UPF0304 family.

The polypeptide is UPF0304 protein VS_1049 (Vibrio atlanticus (strain LGP32) (Vibrio splendidus (strain Mel32))).